The following is a 264-amino-acid chain: uncharacterized protein (264 aa).

Residues 3-243 (LQLDNVSLKR…QILSAFFDTP (241 aa)) enclose the ABC transporter domain. Residue 35 to 42 (GLNGAGKT) participates in ATP binding.

The protein belongs to the ABC transporter superfamily.

This is an uncharacterized protein from Bacillus subtilis (strain 168).